Consider the following 152-residue polypeptide: Protein FERTILITY RESTORER RF2, mitochondrial (152 aa).

The N-terminal 52 residues, 1-52, are a transit peptide targeting the mitochondrion; the sequence is MSTLVTCSLPGAVTTHASTRRFGGSQFQTSQASCISFKREVSAKAVLRSVRC. Polar residues predominate over residues 52–69; that stretch reads CNATQTQSAQRKSSTATV. Positions 52–101 are disordered; sequence CNATQTQSAQRKSSTATVKRSDPKGKTQGPKLDDGSGGFPPFRFGKGGGG.

The protein localises to the mitochondrion. Its function is as follows. Non-functional allele of the RF2 fertility restorer of rice varieties with LD-type cytoplasmic male sterility (CMS). Non-functional RF2 alleles are found in japonica cultivars Taichung 65 and Nipponbare (AC F1SZ44), and is due to the presence of Thr-78 which replaces Ile-78 in the functional allele. Functional allele is found in the japonica cultivars Fukuyama and Owarihatamochi (AC F1SZ42), and indica cultivar Kasalath (AC F1SZ41). This is Protein FERTILITY RESTORER RF2, mitochondrial from Oryza sativa subsp. japonica (Rice).